Here is a 323-residue protein sequence, read N- to C-terminus: Aldo-keto reductase family 1 member C23-like protein (323 aa).

20 to 24 (GFGTY) serves as a coordination point for NADP(+). Substrate is bound at residue Lys-31. An NADP(+)-binding site is contributed by Asp-50. Tyr-55 serves as the catalytic Proton donor. Residue His-117 participates in substrate binding. NADP(+) contacts are provided by residues 166–167 (SN), Gln-190, 216–222 (YGALGTQ), and 270–280 (KSYNEKRIKEN).

It belongs to the aldo/keto reductase family. In terms of assembly, monomer. As to expression, detected in endometrium surface epithelium (at protein level). Detected in endometrium.

It localises to the cytoplasm. Its function is as follows. NADP-dependent oxidoreductase involved in steroid metabolism. May act on various hydroxysteroids. The sequence is that of Aldo-keto reductase family 1 member C23-like protein (PGFS) from Equus caballus (Horse).